The primary structure comprises 175 residues: Large ribosomal subunit protein uL10 (175 aa).

This sequence belongs to the universal ribosomal protein uL10 family. In terms of assembly, part of the ribosomal stalk of the 50S ribosomal subunit. The N-terminus interacts with L11 and the large rRNA to form the base of the stalk. The C-terminus forms an elongated spine to which L12 dimers bind in a sequential fashion forming a multimeric L10(L12)X complex.

Forms part of the ribosomal stalk, playing a central role in the interaction of the ribosome with GTP-bound translation factors. The chain is Large ribosomal subunit protein uL10 from Prochlorococcus marinus (strain MIT 9313).